A 277-amino-acid polypeptide reads, in one-letter code: MTFGPQPNSLTPLINNQICKKKVAIHAQGLNLILGGKTLLDNFDIDINAGEVTALLGPNGAGKSSLLKVLCGEIEATGSIEFFGQNRKQWSAKALAKHLGVLPQHSTLNFAFLAHEVVELGGLPLELSNIQTQQITQEKMALVDVCDLSHRLYPSLSGGEKQRVHFARILTQVSQAGDQCVLMLDEPTSALDLAHQHRTLQVAKELASNGAAVIIVLHDLNLAAQYADRLVIVNHGLIQADGTPWQALQPDIIERVYGWPVYISSHPTGDFPVILSH.

In terms of domain architecture, ABC transporter spans 25–260 (IHAQGLNLIL…DIIERVYGWP (236 aa)). ATP is bound at residue 57-64 (GPNGAGKS).

It belongs to the ABC transporter superfamily. Heme (hemin) importer (TC 3.A.1.14.5) family. As to quaternary structure, the complex is composed of two ATP-binding proteins (HmuV), two transmembrane proteins (HmuU) and a solute-binding protein (HmuT).

The protein localises to the cell inner membrane. Its function is as follows. Part of the ABC transporter complex HmuTUV involved in hemin import. Responsible for energy coupling to the transport system. The sequence is that of Hemin import ATP-binding protein HmuV from Photobacterium profundum (strain SS9).